A 300-amino-acid polypeptide reads, in one-letter code: 4-hydroxy-tetrahydrodipicolinate synthase (300 aa).

T49 contributes to the pyruvate binding site. Y137 (proton donor/acceptor) is an active-site residue. K166 serves as the catalytic Schiff-base intermediate with substrate. I208 provides a ligand contact to pyruvate.

Belongs to the DapA family. As to quaternary structure, homotetramer; dimer of dimers.

The protein resides in the cytoplasm. The catalysed reaction is L-aspartate 4-semialdehyde + pyruvate = (2S,4S)-4-hydroxy-2,3,4,5-tetrahydrodipicolinate + H2O + H(+). The protein operates within amino-acid biosynthesis; L-lysine biosynthesis via DAP pathway; (S)-tetrahydrodipicolinate from L-aspartate: step 3/4. Its function is as follows. Catalyzes the condensation of (S)-aspartate-beta-semialdehyde [(S)-ASA] and pyruvate to 4-hydroxy-tetrahydrodipicolinate (HTPA). The polypeptide is 4-hydroxy-tetrahydrodipicolinate synthase (Methanopyrus kandleri (strain AV19 / DSM 6324 / JCM 9639 / NBRC 100938)).